The chain runs to 421 residues: UDP-N-acetylglucosamine 1-carboxyvinyltransferase (421 aa).

23 to 24 (KN) serves as a coordination point for phosphoenolpyruvate. Arginine 92 serves as a coordination point for UDP-N-acetyl-alpha-D-glucosamine. Cysteine 116 functions as the Proton donor in the catalytic mechanism. Residue cysteine 116 is modified to 2-(S-cysteinyl)pyruvic acid O-phosphothioketal. UDP-N-acetyl-alpha-D-glucosamine is bound by residues 121–125 (RPVDL), 161–164 (KVSV), aspartate 306, and isoleucine 328.

The protein belongs to the EPSP synthase family. MurA subfamily.

Its subcellular location is the cytoplasm. The catalysed reaction is phosphoenolpyruvate + UDP-N-acetyl-alpha-D-glucosamine = UDP-N-acetyl-3-O-(1-carboxyvinyl)-alpha-D-glucosamine + phosphate. It functions in the pathway cell wall biogenesis; peptidoglycan biosynthesis. Cell wall formation. Adds enolpyruvyl to UDP-N-acetylglucosamine. This chain is UDP-N-acetylglucosamine 1-carboxyvinyltransferase, found in Vibrio vulnificus (strain CMCP6).